The chain runs to 174 residues: Large ribosomal subunit protein uL10 (174 aa).

Belongs to the universal ribosomal protein uL10 family. As to quaternary structure, part of the ribosomal stalk of the 50S ribosomal subunit. The N-terminus interacts with L11 and the large rRNA to form the base of the stalk. The C-terminus forms an elongated spine to which L12 dimers bind in a sequential fashion forming a multimeric L10(L12)X complex.

Functionally, forms part of the ribosomal stalk, playing a central role in the interaction of the ribosome with GTP-bound translation factors. The protein is Large ribosomal subunit protein uL10 of Bordetella petrii (strain ATCC BAA-461 / DSM 12804 / CCUG 43448).